We begin with the raw amino-acid sequence, 331 residues long: Adenosine deaminase (331 aa).

Zn(2+) is bound by residues H12 and H14. Residues H14, D16, and G170 each coordinate substrate. A Zn(2+)-binding site is contributed by H197. E200 serves as the catalytic Proton donor. Position 278 (D278) interacts with Zn(2+). Substrate is bound at residue D279.

It belongs to the metallo-dependent hydrolases superfamily. Adenosine and AMP deaminases family. Adenosine deaminase subfamily. Zn(2+) serves as cofactor.

The enzyme catalyses adenosine + H2O + H(+) = inosine + NH4(+). The catalysed reaction is 2'-deoxyadenosine + H2O + H(+) = 2'-deoxyinosine + NH4(+). Catalyzes the hydrolytic deamination of adenosine and 2-deoxyadenosine. This Shewanella putrefaciens (strain CN-32 / ATCC BAA-453) protein is Adenosine deaminase.